The following is a 217-amino-acid chain: Ribosomal RNA small subunit methyltransferase G (217 aa).

Residues Gly-78, Phe-83, 129–130 (GE), and Arg-146 each bind S-adenosyl-L-methionine.

It belongs to the methyltransferase superfamily. RNA methyltransferase RsmG family.

The protein resides in the cytoplasm. It catalyses the reaction guanosine(527) in 16S rRNA + S-adenosyl-L-methionine = N(7)-methylguanosine(527) in 16S rRNA + S-adenosyl-L-homocysteine. In terms of biological role, specifically methylates the N7 position of guanine in position 527 of 16S rRNA. This Geobacter sulfurreducens (strain ATCC 51573 / DSM 12127 / PCA) protein is Ribosomal RNA small subunit methyltransferase G.